A 290-amino-acid chain; its full sequence is Zinc finger protein-like 1 homolog (290 aa).

The B box-type; degenerate zinc finger occupies 1–43; that stretch reads MGLCKCPKRQVTTQFCFEHRVNVCENCMVVNHTKCTVQSYIQW. The RING-type; atypical zinc finger occupies 53–101; the sequence is CPLCGSPLDNEDCVRLICYHVFHWKCLNAKQQSLPANTAPGGHTCPTCS. Residues 156 to 168 show a composition bias toward polar residues; it reads NGNTFASSMSQTR. The tract at residues 156 to 175 is disordered; it reads NGNTFASSMSQTRSNERPES. A helical transmembrane segment spans residues 249–269; sequence WFLVLGGCIGFVCIIYVLATL.

This sequence belongs to the ZFPL1 family.

The protein localises to the membrane. This Aedes aegypti (Yellowfever mosquito) protein is Zinc finger protein-like 1 homolog.